We begin with the raw amino-acid sequence, 202 residues long: uncharacterized protein (202 aa).

A disordered region spans residues 164–202 (DTDSEQESDQESDQDSDQESEESDQESDQDSDQDSEGSE). Residues 165–202 (TDSEQESDQESDQDSDQESEESDQESDQDSDQDSEGSE) are compositionally biased toward acidic residues.

This is an uncharacterized protein from Acanthamoeba polyphaga mimivirus (APMV).